The chain runs to 353 residues: MTEPLKPRIDFDGPLEVDQNPKFRAQQTFDENQAQNFAPATLDEAPEEEGQVEAVMDAALRPKRSLWRKMVMGGLALFGASVVGQGVQWTMNAWQTQDWVALGGCAAGALIIGAGVGSVVTEWRRLWRLRQRAHERDEARDLLHSHGTGKGRAFCEKLAQQAGIDQSHPALQRWYASIHETQNDREVVSLYAHLVQPVLDAQARREISRSAAESTLMIAVSPLALVDMAFIAWRNLRLINRIATLYGIELGYYSRLRLFKLVLLNIAFAGASELVREVGMDWMSQDLAARLSTRAAQGIGAGLLTARLGIKAMELCRPLPWIDDDKPRLGDFRRQLIGQVKETLQKGKTPSEK.

3 helical membrane passes run 70-90 (MVMG…VQWT), 100-120 (VALG…GSVV), and 213-233 (ESTL…FIAW).

This sequence belongs to the UPF0283 family.

The protein localises to the cell inner membrane. This is UPF0283 membrane protein YcjF from Escherichia coli O139:H28 (strain E24377A / ETEC).